A 310-amino-acid polypeptide reads, in one-letter code: 26S proteasome non-ATPase regulatory subunit 14 (310 aa).

Residues 31–166 (VYISSLALLK…IDAFRLINAN (136 aa)) form the MPN domain. Zn(2+)-binding residues include H113, H115, and D126. A JAMM motif motif is present at residues 113–126 (HSHPGFGCWLSGVD). S150 and S224 each carry phosphoserine. T266 bears the Phosphothreonine mark.

The protein belongs to the peptidase M67A family. PSMD14 subfamily. Component of the 19S proteasome regulatory particle complex. The 26S proteasome consists of a 20S core particle (CP) and two 19S regulatory subunits (RP). The regulatory particle is made of a lid composed of 9 subunits including PSMD4, a base containing 6 ATPases and few additional components. Within the complex, PSMD4 interacts with subunit PSMD7 through their respective MPN domain. Interacts with TXNL1. In terms of tissue distribution, widely expressed. Highest levels in heart and skeletal muscle.

In terms of biological role, component of the 26S proteasome, a multiprotein complex involved in the ATP-dependent degradation of ubiquitinated proteins. This complex plays a key role in the maintenance of protein homeostasis by removing misfolded or damaged proteins, which could impair cellular functions, and by removing proteins whose functions are no longer required. Therefore, the proteasome participates in numerous cellular processes, including cell cycle progression, apoptosis, or DNA damage repair. The PSMD14 subunit is a metalloprotease that specifically cleaves 'Lys-63'-linked polyubiquitin chains within the complex. Plays a role in response to double-strand breaks (DSBs): acts as a regulator of non-homologous end joining (NHEJ) by cleaving 'Lys-63'-linked polyubiquitin, thereby promoting retention of JMJD2A/KDM4A on chromatin and restricting TP53BP1 accumulation. Also involved in homologous recombination repair by promoting RAD51 loading. The protein is 26S proteasome non-ATPase regulatory subunit 14 (PSMD14) of Homo sapiens (Human).